Consider the following 370-residue polypeptide: Putative F-box protein At3g10430 (370 aa).

Positions 1 to 47 (MGSSLPFDLILEILQRTPAESLLRFKSTCKKWYELISNDKRFMYKHL) constitute an F-box domain.

The polypeptide is Putative F-box protein At3g10430 (Arabidopsis thaliana (Mouse-ear cress)).